Consider the following 386-residue polypeptide: LL-diaminopimelate aminotransferase (386 aa).

Y13 and G38 together coordinate substrate. Residues Y67, 101–102 (SK), Y126, N176, Y207, and 235–237 (SLS) contribute to the pyridoxal 5'-phosphate site. Substrate contacts are provided by K102, Y126, and N176. N6-(pyridoxal phosphate)lysine is present on K238. R246 serves as a coordination point for pyridoxal 5'-phosphate. R364 contacts substrate.

It belongs to the class-I pyridoxal-phosphate-dependent aminotransferase family. LL-diaminopimelate aminotransferase subfamily. In terms of assembly, homodimer. It depends on pyridoxal 5'-phosphate as a cofactor.

The enzyme catalyses (2S,6S)-2,6-diaminopimelate + 2-oxoglutarate = (S)-2,3,4,5-tetrahydrodipicolinate + L-glutamate + H2O + H(+). The protein operates within amino-acid biosynthesis; L-lysine biosynthesis via DAP pathway; LL-2,6-diaminopimelate from (S)-tetrahydrodipicolinate (aminotransferase route): step 1/1. In terms of biological role, involved in the synthesis of meso-diaminopimelate (m-DAP or DL-DAP), required for both lysine and peptidoglycan biosynthesis. Catalyzes the direct conversion of tetrahydrodipicolinate to LL-diaminopimelate. This Natranaerobius thermophilus (strain ATCC BAA-1301 / DSM 18059 / JW/NM-WN-LF) protein is LL-diaminopimelate aminotransferase.